Here is an 80-residue protein sequence, read N- to C-terminus: Exodeoxyribonuclease 7 small subunit (80 aa).

It belongs to the XseB family. In terms of assembly, heterooligomer composed of large and small subunits.

The protein localises to the cytoplasm. It carries out the reaction Exonucleolytic cleavage in either 5'- to 3'- or 3'- to 5'-direction to yield nucleoside 5'-phosphates.. In terms of biological role, bidirectionally degrades single-stranded DNA into large acid-insoluble oligonucleotides, which are then degraded further into small acid-soluble oligonucleotides. The sequence is that of Exodeoxyribonuclease 7 small subunit from Erwinia tasmaniensis (strain DSM 17950 / CFBP 7177 / CIP 109463 / NCPPB 4357 / Et1/99).